A 197-amino-acid polypeptide reads, in one-letter code: UDP-N-acetylglucosamine transferase subunit ALG13 (197 aa).

Belongs to the glycosyltransferase 28 family. Heterodimer with ALG14 to form a functional enzyme.

Its subcellular location is the endoplasmic reticulum. The catalysed reaction is an N-acetyl-alpha-D-glucosaminyl-diphospho-di-trans,poly-cis-dolichol + UDP-N-acetyl-alpha-D-glucosamine = an N,N'-diacetylchitobiosyl-diphospho-di-trans,poly-cis-dolichol + UDP + H(+). In terms of biological role, involved in protein N-glycosylation. Essential for the second step of the dolichol-linked oligosaccharide pathway. The protein is UDP-N-acetylglucosamine transferase subunit ALG13 (ALG13) of Kluyveromyces lactis (strain ATCC 8585 / CBS 2359 / DSM 70799 / NBRC 1267 / NRRL Y-1140 / WM37) (Yeast).